A 1035-amino-acid polypeptide reads, in one-letter code: NACHT, LRR and PYD domains-containing protein 3 (1035 aa).

The 93-residue stretch at 1–93 (MKMASTRCKL…YEKAKRDEPK (93 aa)) folds into the Pyrin domain. S5 carries the phosphoserine modification. Residues C8 and C108 are joined by a disulfide bond. Phosphotyrosine is present on Y13. C130 carries S-palmitoyl cysteine lipidation. The segment at 131-134 (KKKK) is required for binding to phosphatidylinositol 4-phosphate (PtdIns4P). Residues Y136, Y140, and Y143 each carry the phosphotyrosine modification. Residues 140-210 (YRKYVRSRFQ…SPIKMELLFD (71 aa)) form the FISNA domain. 2 positions are modified to phosphoserine: S161 and S163. Y168 is subject to Phosphotyrosine. ATP is bound at residue T169. Residues S198 and S201 each carry the phosphoserine modification. Residues 220–536 (HTVVFQGAAG…EFFAAMYYLL (317 aa)) form the NACHT domain. 226 to 233 (GAAGIGKT) serves as a coordination point for ATP. Phosphoserine occurs at positions 265 and 295. K324 is covalently cross-linked (Glycyl lysine isopeptide (Lys-Gly) (interchain with G-Cter in ubiquitin)). S334 is modified (phosphoserine). The short motif at 355–359 (LEKLQ) is the KFERQ-like motif 1 element. K430 participates in a covalent cross-link: Glycyl lysine isopeptide (Lys-Gly) (interchain with G-Cter in ubiquitin). H522 contributes to the ATP binding site. The short motif at 603–607 (QIRLE) is the KFERQ-like motif 2 element. A Glycyl lysine isopeptide (Lys-Gly) (interchain with G-Cter in ubiquitin) cross-link involves residue K689. Phosphoserine is present on residues S727 and S734. LRR repeat units lie at residues 741 to 761 (SLTE…RVLC), 770 to 791 (NIRR…DISL), 798 to 818 (KLVE…RLLC), 827 to 848 (NLKK…DLAS), and 855 to 875 (SLTR…AILC). The KFERQ-like motif 3 signature appears at 797–801 (QKLVE). S805 is modified (phosphoserine). S-palmitoyl cysteine attachment occurs at residues C836, C837, and C843. Residue Y860 is modified to Phosphotyrosine. Residue K877 forms a Glycyl lysine isopeptide (Lys-Gly) (interchain with G-Cter in ubiquitin) linkage. 4 LRR repeats span residues 884–905 (NLQK…ALSS), 912–932 (NLTH…KLLC), 941–962 (KLQV…DLST), and 969–990 (SLRK…MFCE). Residue K926 forms a Glycyl lysine isopeptide (Lys-Gly) (interchain with G-Cter in ubiquitin) linkage. C957 carries S-palmitoyl cysteine lipidation. K972 participates in a covalent cross-link: Glycyl lysine isopeptide (Lys-Gly) (interchain with G-Cter in ubiquitin). Phosphoserine is present on S974. Residues 990-994 (EVLKQ) carry the KFERQ-like motif 4 motif. Phosphoserine is present on S1034.

Belongs to the NLRP family. As to quaternary structure, sensor component of NLRP3 inflammasomes; inflammasomes are supramolecular complexes that assemble in the cytosol in response to pathogens and other damage-associated signals and play critical roles in innate immunity and inflammation. The core of NLRP3 inflammasomes consists of a signal sensor component (NLRP3), an adapter (PYCARD/ASC), which recruits an effector pro-inflammatory caspase (CASP1 and, possibly, CASP4 and CASP5). Homodecamer; inactive NLRP3 forms homodecameric double-ring cages that hide pyrin domains within NACHT-LRR rings to avoid premature activation. Interacts (via pyrin domain) with PYCARD/ASC (via pyrin domain); interaction is direct. Interacts (via LRR repeat domain) with NEK7 (via N-terminus); the interaction is required for the formation of the complex NLRP3:PYCARD, oligomerization of PYCARD/ASC and activation of CASP1. Interacts (via LRR repeat domain) with NR4A1/Nur77 (via N-terminus); the interaction is direct, requires activation of NR4A1 by its ligands NBRE-containing dsDNA and lipopolysaccharide, and stimulates the association of NLRP3 with NEK7 for non-canonical NLRP3 inflammasome activation. Interacts with CARD8; leading to inhibit formation of the NLRP3 inflammasome. Interacts with MEFV; this interaction targets NLRP3 to degradation by autophagy, hence preventing excessive IL1B- and IL18-mediated inflammation. Interacts with EIF2AK2/PKR; this interaction requires EIF2AK2 activity, is accompanied by EIF2AK2 autophosphorylation and promotes inflammasome assembly in response to specific stimuli. Interacts with GBP5 (via DAPIN domain); this interaction promotes inflammasome assembly in response to microbial and soluble, but not crystalline, agents. Interacts with PML (isoform PML-1) (via the leucine-rich repeat (LRR) domain); PML-mediated increase in NLRP3 inflammasome activation does not depend upon this interaction. Interacts (via NACHT domain) with DHX33 (via DEAH box); NLRP3 activation in presence of cytosolic dsRNA is mediated by DHX33. Interacts (via NACHT and LRR domains) with ARRB2; this interaction is direct and inducible by polyunsaturated fatty acids (PUFAs). Interacts (via NACHT domain) with DDX3X under both LPS-primed and inflammasome-activating conditions. Interacts with IRF4 (via the LRR domain); this interaction is direct and is required for optimal IRF4 binding to IL4 promoter and efficient IL4 transactivation during differentiation of Th2 helper T-cells. Interacts with MAVS; promoting localization to mitochondria and activation of the NLRP3 inflammasome. Interacts with MARK4; promoting localization of NLRP3 to the microtubule organizing center (MTOC). Interacts with TRIM50; this interaction also promotes NLRP3 oligomerization and subsequent inflammasome activation. Interacts with IRGM; preventing NLRP3 inflammasome assembly and promoting NLRP3 degradation. Interacts (via KFERQ-like motifs) with HSPA8/HSC70; promoting NLRP3 degradation by the chaperone-mediated autophagy pathway. Interacts (via NACHT and LLR domains) with ABHD8; this interaction is enhanced in the presence of NLRP3 inflammasome inducers, such as ATP, nigericin, silica, or alum. Interaction with ABHD8 leads the recruitment of ZDHHC12, hence facilitating NLRP3 palmitoylation and degradation by the chaperone-mediated autophagy pathway (CMA), therefore attenuating NLRP3 inflammasome activation. The disulfide bond in the pyrin domain might play a role in reactive oxygen species-mediated activation. In terms of processing, phosphorylation at Ser-198 by MAPK8/JNK1 increases inflammasome activation by promoting deubiquitination by BRCC3 and NLRP3 homooligomerization. Phosphorylation at Ser-805 by CSNK1A1 prevents inflammasome activation by preventing NEK7 recruitment. Phosphorylation at Ser-5 in the pyrin domain inhibits homomultimerization of NLRP3 and activation of the NLRP3 inflammasome: dephosphorylation by protein phosphatase 2A (PP2A) promotes assembly of the NLRP3 inflammasome. Phosphorylation at Ser-295 by PKD/PRKD1 promotes NLRP3 inflammasome assembly. Phosphorylation by ERK1/MAPK3 promotes NLRP3 inflammasome assembly. Phosphorylation by BTK (at Tyr-136, Tyr-140, Tyr-143 and Tyr-168) in the region that mediates binding to phosphatidylinositol phosphate, promotes relocalization of NLRP3 and assembly of the NLRP3 inflammasome. Phosphorylation at Tyr-860 inhibits NLRP3 inflammasome assembly: dephosphorylation by PTPN22 promotes inflammasome activation. Phosphorylated by LATS1 and LATS2 at Ser-265 following palmitoylation by ZDHHC1, promoting its relocalization to the microtubule organizing center (MTOC), where NLRP3 is activated by NEK7, leading to inflammasome assembly and activation. Post-translationally, ubiquitinated; undergoes both 'Lys-48'- and 'Lys-63'-linked polyubiquitination. Ubiquitination does not lead to degradation, but inhibits inflammasome activation. Deubiquitination is catalyzed by BRCC3 and associated with NLRP3 activation and inflammasome assembly. This process can be induced by the activation of Toll-like receptors (by LPS), through a non-transcriptional pathway dependent on the mitochondrial production of reactive oxygen species, and by ATP. Ubiquitinated by TRIM31 via 'Lys-48'-linked ubiquitination, leading to its degradation by the proteasome. Ubiquitinated at Lys-689 by the SCF(FBXL2) complex, leading to its degradation by the proteasome. Ubiquitinated by TRIM35 via 'lys-48' and 'Lys-63'-linked ubiquitination leading to inhibition of NLRP3 inflammasome activation. Undergoes 'Lys-27'-linked polyubiquitination by MARCHF5, leading to NLRP3-NEK7 complex formation and NLRP3 oligomerization. Palmitoylation by ZDHHC12 promotes NLRP3 degradation by the chaperone-mediated autophagy pathway (CMA) and therefore limits NLRP3 inflammasome activation. Interaction with ZDHHC12, and hence NLRP3 palmitoylation, is greatly enhanced by ABHD8. Following palmitoylation, HSPA8/HSC70 recognizes and binds the KFERQ-like motifs on NLRP3 and promotes NLRP3 recruitment to lysosomes, where it is degraded via the chaperone-mediated autophagy pathway in a LAMP2-dependent process. Palmitoylation at Cys-836 and Cys-837 by ZDHHC5 enhances its binding to NEK7 leading to inflammasome assembly and activation. Palmitoylation at Cys-130 and Cys-957 by ZDHHC1 facilitates phosphorylation at Ser-265 by LATS1 and LATS2, promoting its relocalization to the microtubule organizing center (MTOC), where NLRP3 is activated by NEK7, leading to inflammasome assembly and activation. Depalmitoylated by ABHD17A. In terms of processing, degraded via selective autophagy following interaction with IRGM. IRGM promotes NLRP3 recruitment to autophagosome membranes, promoting its SQSTM1/p62-dependent autophagy-dependent degradation. In terms of tissue distribution, highly expressed in oocyte, testis, spleen, thymus and kidney.

It localises to the cytoplasm. It is found in the cytosol. The protein localises to the inflammasome. Its subcellular location is the cytoskeleton. The protein resides in the microtubule organizing center. It localises to the golgi apparatus membrane. It is found in the endoplasmic reticulum. The protein localises to the mitochondrion. Its subcellular location is the secreted. The protein resides in the nucleus. It catalyses the reaction ATP + H2O = ADP + phosphate + H(+). Its activity is regulated as follows. Under resting conditions, NLRP3 binds ADP and is autoinhibited. Inactive NLRP3 forms homodecameric double-ring cages that hide pyrin domains within NACHT-LRR rings to avoid premature activation. NLRP3 activation stimuli include extracellular ATP, nigericin, reactive oxygen species, crystals of monosodium urate or cholesterol, amyloid-beta fibers, environmental or industrial particles and nanoparticles, such as asbestos, silica, aluminum salts, cytosolic dsRNA, etc. Almost all stimuli trigger intracellular K(+) efflux. These stimuli lead to membrane perturbations that induce activation of NLRP3. Upon activation, NLRP3 is transported to microtubule organizing center (MTOC), where it is unlocked by NEK7, leading to its relocalization to dispersed trans-Golgi network (dTGN) vesicle membranes and recruitment of PYCARD/ASC for the formation of an active inflammasome complex. NEK7-activated NLRP3 forms a disk-shaped inflammasome. NLRP3 and PYCARD/ASC interact via their respective pyrin domains; interaction initiates speck formation (nucleation) which greatly enhances further addition of soluble PYCARD/ASC molecules to the speck in a prion-like polymerization process. Clustered PYCARD/ASC nucleates the formation of CASP1 filaments through the interaction of their respective CARD domains, acting as a platform for CASP1 polymerization and activation. Active CASP1 then processes IL1B and IL18 precursors, leading to the release of mature cytokines in the extracellular milieu and inflammatory response. NLRP3 inflammasome assembly is inhibited by IRGM, which impedes NLRP3 oligomerization. NLRP3 inflammasome is inhibited by cyclic AMP (cAMP), which directly binds NLRP3; inhibition is relieved by calcium-sensing receptor CASR, which inhibits production of cAMP. Specifically inhibited by sulfonylurea MCC950 (also named CP-456,773, CRID3), a potent and specific small-molecule inhibitor of the NLRP3 inflammasome that acts by preventing ATP hydrolysis. Sensor component of the NLRP3 inflammasome, which mediates inflammasome activation in response to defects in membrane integrity, leading to secretion of inflammatory cytokines IL1B and IL18 and pyroptosis. In response to pathogens and other damage-associated signals that affect the integrity of membranes, initiates the formation of the inflammasome polymeric complex composed of NLRP3, CASP1 and PYCARD/ASC. Recruitment of pro-caspase-1 (proCASP1) to the NLRP3 inflammasome promotes caspase-1 (CASP1) activation, which subsequently cleaves and activates inflammatory cytokines IL1B and IL18 and gasdermin-D (GSDMD), promoting cytokine secretion and pyroptosis. Activation of NLRP3 inflammasome is also required for HMGB1 secretion; stimulating inflammatory responses. Under resting conditions, ADP-bound NLRP3 is autoinhibited. NLRP3 activation stimuli include extracellular ATP, nigericin, reactive oxygen species, crystals of monosodium urate or cholesterol, amyloid-beta fibers, environmental or industrial particles and nanoparticles, such as asbestos, silica, aluminum salts, cytosolic dsRNA, etc. Almost all stimuli trigger intracellular K(+) efflux. These stimuli lead to membrane perturbation and activation of NLRP3. Upon activation, NLRP3 is transported to microtubule organizing center (MTOC), where it is unlocked by NEK7, leading to its relocalization to dispersed trans-Golgi network (dTGN) vesicle membranes and formation of an active inflammasome complex. Associates with dTGN vesicle membranes by binding to phosphatidylinositol 4-phosphate (PtdIns4P). Shows ATPase activity. Its function is as follows. Independently of inflammasome activation, regulates the differentiation of T helper 2 (Th2) cells and has a role in Th2 cell-dependent asthma and tumor growth. During Th2 differentiation, required for optimal IRF4 binding to IL4 promoter and for IRF4-dependent IL4 transcription. Binds to the consensus DNA sequence 5'-GRRGGNRGAG-3'. May also participate in the transcription of IL5, IL13, GATA3, CCR3, CCR4 and MAF. In Macaca mulatta (Rhesus macaque), this protein is NACHT, LRR and PYD domains-containing protein 3 (NLRP3).